The following is a 115-amino-acid chain: Large ribosomal subunit protein bL19 (115 aa).

This sequence belongs to the bacterial ribosomal protein bL19 family.

Its function is as follows. This protein is located at the 30S-50S ribosomal subunit interface and may play a role in the structure and function of the aminoacyl-tRNA binding site. The sequence is that of Large ribosomal subunit protein bL19 from Lachnospira eligens (strain ATCC 27750 / DSM 3376 / VPI C15-48 / C15-B4) (Eubacterium eligens).